Here is a 131-residue protein sequence, read N- to C-terminus: Profilin-4 (131 aa).

A disulfide bridge links Cys13 with Cys115. An Involved in PIP2 interaction motif is present at residues 81–97; that stretch reads AVIRGKKGAGGITVKKT. The residue at position 111 (Thr111) is a Phosphothreonine.

This sequence belongs to the profilin family. In terms of assembly, occurs in many kinds of cells as a complex with monomeric actin in a 1:1 ratio. In terms of processing, phosphorylated by MAP kinases.

It is found in the cytoplasm. Its subcellular location is the cytoskeleton. In terms of biological role, binds to actin and affects the structure of the cytoskeleton. At high concentrations, profilin prevents the polymerization of actin, whereas it enhances it at low concentrations. This Olea europaea (Common olive) protein is Profilin-4.